Here is a 175-residue protein sequence, read N- to C-terminus: Isopentenyl-diphosphate Delta-isomerase (175 aa).

His-23 and His-30 together coordinate Mn(2+). The region spanning 28–162 is the Nudix hydrolase domain; the sequence is TLHLAFCVFV…PLRYTPWFRR (135 aa). The active site involves Cys-65. Mn(2+) is bound at residue His-67. Residue Glu-85 coordinates Mg(2+). 2 residues coordinate Mn(2+): Glu-111 and Glu-113. Residue Glu-113 is part of the active site.

Belongs to the IPP isomerase type 1 family. Requires Mg(2+) as cofactor. Mn(2+) is required as a cofactor.

Its subcellular location is the cytoplasm. The enzyme catalyses isopentenyl diphosphate = dimethylallyl diphosphate. It participates in isoprenoid biosynthesis; dimethylallyl diphosphate biosynthesis; dimethylallyl diphosphate from isopentenyl diphosphate: step 1/1. Functionally, catalyzes the 1,3-allylic rearrangement of the homoallylic substrate isopentenyl (IPP) to its highly electrophilic allylic isomer, dimethylallyl diphosphate (DMAPP). The protein is Isopentenyl-diphosphate Delta-isomerase of Halorhodospira halophila (strain DSM 244 / SL1) (Ectothiorhodospira halophila (strain DSM 244 / SL1)).